A 400-amino-acid polypeptide reads, in one-letter code: uncharacterized protein (400 aa).

The protein belongs to the mimivirus R640 family.

The protein localises to the virion. This is an uncharacterized protein from Acanthamoeba polyphaga (Amoeba).